The following is a 221-amino-acid chain: Probable lipoprotein CT_734 (221 aa).

An N-terminal signal peptide occupies residues 1–24 (MKKFIYKYSFGALLLLSGLSGLSS). Cys-25 is lipidated: N-palmitoyl cysteine. Cys-25 carries S-diacylglycerol cysteine lipidation.

This sequence belongs to the chlamydial CPn_0875/CT_734/TC_0107 family.

It localises to the cell membrane. The sequence is that of Probable lipoprotein CT_734 from Chlamydia trachomatis serovar D (strain ATCC VR-885 / DSM 19411 / UW-3/Cx).